The sequence spans 466 residues: Coproporphyrinogen III oxidase (466 aa).

FAD is bound by residues 9 to 14, 34 to 35, K42, 56 to 59, V254, and 446 to 448; these read GAGITG, EA, GPES, and VGL.

The protein belongs to the protoporphyrinogen/coproporphyrinogen oxidase family. Coproporphyrinogen III oxidase subfamily. FAD serves as cofactor.

It localises to the cytoplasm. It carries out the reaction coproporphyrinogen III + 3 O2 = coproporphyrin III + 3 H2O2. It functions in the pathway porphyrin-containing compound metabolism; protoheme biosynthesis. Its activity is regulated as follows. The generation of protoporphyrin IX, but not coproporphyrin III, is stimulated by heme-bound HemQ. This stimulatory effect is mediated by superoxide. Inhibited by acifluorfen analogs. Functionally, involved in coproporphyrin-dependent heme b biosynthesis. Catalyzes the oxidation of coproporphyrinogen III to coproporphyrin III. Can also oxidize protoporphyrinogen IX. The chain is Coproporphyrinogen III oxidase from Staphylococcus aureus (strain NCTC 8325 / PS 47).